The chain runs to 672 residues: Putative sodium/calcium exchanger 7 (672 aa).

The signal sequence occupies residues 1 to 23; it reads MAQPSILFSLTLIFLISIKSCDA. 12 helical membrane passes run 88 to 108, 130 to 150, 164 to 184, 196 to 216, 221 to 241, 451 to 471, 479 to 499, 522 to 542, 551 to 571, 581 to 601, 620 to 640, and 649 to 669; these read VILIIVGVIYMLVLFIMVSSA, VAGVTFMAFGNGAPDVFGSIA, LGELFGGGLFVTTMVVSTIIL, IRDLLFYLVALSFLAFCFVFY, LWMPLTFLGLYLLYVITVIGA, LTLLHAFTCPAFLLFSIQFFL, PGLWVYGLAVSIVLAILIMVF, IAWIYLISSEVVNVVTMLGVV, GLTILAWSNSIGDLIADVSVV, AAAIGGPLFNLLMGFGLPFTI, LILFLAISLLATLIGIPVQKF, and VLISIYIAFIVFVILSETGVL.

It belongs to the Ca(2+):cation antiporter (CaCA) (TC 2.A.19) family.

It is found in the membrane. This is Putative sodium/calcium exchanger 7 (ncx-7) from Caenorhabditis elegans.